The sequence spans 104 residues: UPF0145 protein DET1617 (104 aa).

Belongs to the UPF0145 family.

The sequence is that of UPF0145 protein DET1617 from Dehalococcoides mccartyi (strain ATCC BAA-2266 / KCTC 15142 / 195) (Dehalococcoides ethenogenes (strain 195)).